We begin with the raw amino-acid sequence, 626 residues long: UvrABC system protein C (626 aa).

The region spanning 20–97 (ECSGVYKMLD…IKKFQPKFNI (78 aa)) is the GIY-YIG domain. The UVR domain occupies 207 to 242 (IALQANLSKKMQELSSQMRFEEAAEIRDRIKALSYV).

This sequence belongs to the UvrC family. Interacts with UvrB in an incision complex.

The protein resides in the cytoplasm. In terms of biological role, the UvrABC repair system catalyzes the recognition and processing of DNA lesions. UvrC both incises the 5' and 3' sides of the lesion. The N-terminal half is responsible for the 3' incision and the C-terminal half is responsible for the 5' incision. The polypeptide is UvrABC system protein C (Rickettsia prowazekii (strain Madrid E)).